Here is a 325-residue protein sequence, read N- to C-terminus: N-acetyl-gamma-glutamyl-phosphate reductase (325 aa).

Residue Cys-135 is part of the active site.

The protein belongs to the NAGSA dehydrogenase family. Type 1 subfamily.

The protein localises to the cytoplasm. It catalyses the reaction N-acetyl-L-glutamate 5-semialdehyde + phosphate + NADP(+) = N-acetyl-L-glutamyl 5-phosphate + NADPH + H(+). Its pathway is amino-acid biosynthesis; L-arginine biosynthesis; N(2)-acetyl-L-ornithine from L-glutamate: step 3/4. Catalyzes the NADPH-dependent reduction of N-acetyl-5-glutamyl phosphate to yield N-acetyl-L-glutamate 5-semialdehyde. The chain is N-acetyl-gamma-glutamyl-phosphate reductase from Flavobacterium johnsoniae (strain ATCC 17061 / DSM 2064 / JCM 8514 / BCRC 14874 / CCUG 350202 / NBRC 14942 / NCIMB 11054 / UW101) (Cytophaga johnsonae).